The sequence spans 204 residues: High frequency lysogenization protein HflD homolog (204 aa).

Belongs to the HflD family.

The protein localises to the cytoplasm. It localises to the cell inner membrane. In Stenotrophomonas maltophilia (strain K279a), this protein is High frequency lysogenization protein HflD homolog.